The primary structure comprises 1131 residues: Chitin synthase 1 (1131 aa).

Residues Met-1 to Pro-20 show a composition bias toward basic and acidic residues. The disordered stretch occupies residues Met-1 to Tyr-22. Ser-34, Ser-35, Ser-270, Ser-299, and Ser-318 each carry phosphoserine. The segment at Tyr-282 to Ser-305 is disordered. The residue at position 328 (Thr-328) is a Phosphothreonine. Ser-358 bears the Phosphoserine mark. Helical transmembrane passes span Phe-795 to Val-815, Val-833 to Ser-853, Val-866 to Met-886, Ile-914 to Gln-934, Phe-942 to Cys-962, Leu-1042 to Gly-1062, and Ile-1101 to Ile-1121.

It belongs to the chitin synthase family.

The protein localises to the cell membrane. The enzyme catalyses [(1-&gt;4)-N-acetyl-beta-D-glucosaminyl](n) + UDP-N-acetyl-alpha-D-glucosamine = [(1-&gt;4)-N-acetyl-beta-D-glucosaminyl](n+1) + UDP + H(+). With respect to regulation, requires proteolytic activation. Its function is as follows. Polymerizes chitin, a structural polymer of the cell wall and septum, by transferring the sugar moiety of UDP-GlcNAc to the non-reducing end of the growing chitin polymer. Required for mitotic division septum formation during adverse conditions. This is Chitin synthase 1 (CHS1) from Saccharomyces cerevisiae (strain ATCC 204508 / S288c) (Baker's yeast).